The primary structure comprises 347 residues: Ryncolin-3 (347 aa).

Residues 1-19 (MKPWAAFHLIFLVASSVEG) form the signal peptide. A Collagen-like domain is found at 57-114 (GIPGVPGINGSEGLKGDPGPQGLPGETGFDGIPGVAGPKGDKGDQGDKGDKGDKGDKG). A disordered region spans residues 62–115 (PGINGSEGLKGDPGPQGLPGETGFDGIPGVAGPKGDKGDQGDKGDKGDKGDKGD). Over residues 95 to 115 (KGDKGDQGDKGDKGDKGDKGD) the composition is skewed to basic and acidic residues. Positions 121–341 (DCPPTDVEVR…YADMKIRPQQ (221 aa)) constitute a Fibrinogen C-terminal domain. 2 disulfide bridges follow: Cys-132–Cys-160 and Cys-284–Cys-297.

The protein belongs to the ficolin lectin family. Veficolin subfamily. In terms of processing, hydroxylated. As to expression, expressed by the venom duct.

It is found in the secreted. Initiates complement activation and/or interferes in platelet aggregation and/or blood coagulation. The sequence is that of Ryncolin-3 from Cerberus rynchops (Dog-faced water snake).